A 72-amino-acid polypeptide reads, in one-letter code: Translation initiation factor IF-1 (72 aa).

The 72-residue stretch at 1-72 (MPKEEVLEFP…TKGRITYRFK (72 aa)) folds into the S1-like domain.

Belongs to the IF-1 family. In terms of assembly, component of the 30S ribosomal translation pre-initiation complex which assembles on the 30S ribosome in the order IF-2 and IF-3, IF-1 and N-formylmethionyl-tRNA(fMet); mRNA recruitment can occur at any time during PIC assembly.

Its subcellular location is the cytoplasm. Its function is as follows. One of the essential components for the initiation of protein synthesis. Stabilizes the binding of IF-2 and IF-3 on the 30S subunit to which N-formylmethionyl-tRNA(fMet) subsequently binds. Helps modulate mRNA selection, yielding the 30S pre-initiation complex (PIC). Upon addition of the 50S ribosomal subunit IF-1, IF-2 and IF-3 are released leaving the mature 70S translation initiation complex. This chain is Translation initiation factor IF-1, found in Chelativorans sp. (strain BNC1).